Here is a 105-residue protein sequence, read N- to C-terminus: Protein yippee-like At4g27740 (105 aa).

Positions 8 to 105 constitute a Yippee domain; it reads PTYFCRNCEN…IEKLKLTKRY (98 aa). Zn(2+) contacts are provided by cysteine 12, cysteine 15, cysteine 68, and cysteine 71.

It belongs to the yippee family.

This Arabidopsis thaliana (Mouse-ear cress) protein is Protein yippee-like At4g27740.